The primary structure comprises 221 residues: U1 small nuclear ribonucleoprotein C (221 aa).

The Matrin-type zinc-finger motif lies at 4 to 36; sequence HYCDYCDVFLTHDSVSVRKAHNSGRNHLQNVRE. Residues 80 to 221 are disordered; that stretch reads GAGPLSGSSD…PHSRTGYGPR (142 aa). Over residues 142 to 158 the composition is skewed to pro residues; it reads YSRPPPQGGPYSRPPPD. Positions 178–190 are enriched in low complexity; it reads PLGYGAPLPGAYP. Positions 191 to 204 are enriched in pro residues; sequence SGPPPNMRGPPPPL.

It belongs to the U1 small nuclear ribonucleoprotein C family. U1 snRNP is composed of the 7 core Sm proteins B/B', D1, D2, D3, E, F and G that assemble in a heptameric protein ring on the Sm site of the small nuclear RNA to form the core snRNP, and at least 3 U1 snRNP-specific proteins U1-70K, U1-A and U1-C. U1-C interacts with U1 snRNA and the 5' splice-site region of the pre-mRNA.

The protein resides in the nucleus. In terms of biological role, component of the spliceosomal U1 snRNP, which is essential for recognition of the pre-mRNA 5' splice-site and the subsequent assembly of the spliceosome. U1-C is directly involved in initial 5' splice-site recognition for both constitutive and regulated alternative splicing. The interaction with the 5' splice-site seems to precede base-pairing between the pre-mRNA and the U1 snRNA. Stimulates commitment or early (E) complex formation by stabilizing the base pairing of the 5' end of the U1 snRNA and the 5' splice-site region. This is U1 small nuclear ribonucleoprotein C from Mycosarcoma maydis (Corn smut fungus).